A 156-amino-acid polypeptide reads, in one-letter code: 6,7-dimethyl-8-ribityllumazine synthase (156 aa).

5-amino-6-(D-ribitylamino)uracil-binding positions include Phe-23, 57-59 (SFE), and 81-83 (AVI). (2S)-2-hydroxy-3-oxobutyl phosphate is bound at residue 86–87 (GT). Residue His-89 is the Proton donor of the active site. Residue Tyr-114 participates in 5-amino-6-(D-ribitylamino)uracil binding. Arg-128 provides a ligand contact to (2S)-2-hydroxy-3-oxobutyl phosphate.

It belongs to the DMRL synthase family. As to quaternary structure, forms an icosahedral capsid composed of 60 subunits, arranged as a dodecamer of pentamers.

It catalyses the reaction (2S)-2-hydroxy-3-oxobutyl phosphate + 5-amino-6-(D-ribitylamino)uracil = 6,7-dimethyl-8-(1-D-ribityl)lumazine + phosphate + 2 H2O + H(+). The protein operates within cofactor biosynthesis; riboflavin biosynthesis; riboflavin from 2-hydroxy-3-oxobutyl phosphate and 5-amino-6-(D-ribitylamino)uracil: step 1/2. Functionally, catalyzes the formation of 6,7-dimethyl-8-ribityllumazine by condensation of 5-amino-6-(D-ribitylamino)uracil with 3,4-dihydroxy-2-butanone 4-phosphate. This is the penultimate step in the biosynthesis of riboflavin. The polypeptide is 6,7-dimethyl-8-ribityllumazine synthase (Halorhodospira halophila (strain DSM 244 / SL1) (Ectothiorhodospira halophila (strain DSM 244 / SL1))).